The following is a 218-amino-acid chain: Eukaryotic translation initiation factor 3 subunit K (218 aa).

Residues 42–204 (YDLEANLAVL…NIKPKNIVEK (163 aa)) enclose the PCI domain.

It belongs to the eIF-3 subunit K family. As to quaternary structure, component of the eukaryotic translation initiation factor 3 (eIF-3) complex, which is composed of 13 subunits: eif3a, eif3b, eif3c, eif3d, eif3e, eif3f, eif3g, eif3h, eif3i, eif3j, eif3k, eif3l and eif3m.

It is found in the nucleus. Its subcellular location is the cytoplasm. Its function is as follows. Component of the eukaryotic translation initiation factor 3 (eIF-3) complex, which is involved in protein synthesis of a specialized repertoire of mRNAs and, together with other initiation factors, stimulates binding of mRNA and methionyl-tRNAi to the 40S ribosome. The eIF-3 complex specifically targets and initiates translation of a subset of mRNAs involved in cell proliferation. The protein is Eukaryotic translation initiation factor 3 subunit K (eif3k) of Xenopus tropicalis (Western clawed frog).